The chain runs to 623 residues: Glutathione import ATP-binding protein GsiA (623 aa).

ABC transporter domains are found at residues 15–269 (VENL…RALL) and 314–564 (LRVR…RKLL). Residues 49–56 (GESGSGKS) and 357–364 (GESGSGKS) contribute to the ATP site.

Belongs to the ABC transporter superfamily. Glutathione importer (TC 3.A.1.5.11) family. The complex is composed of two ATP-binding proteins (GsiA), two transmembrane proteins (GsiC and GsiD) and a solute-binding protein (GsiB).

Its subcellular location is the cell inner membrane. The catalysed reaction is glutathione(out) + ATP + H2O = glutathione(in) + ADP + phosphate + H(+). Its function is as follows. Part of the ABC transporter complex GsiABCD involved in glutathione import. Responsible for energy coupling to the transport system. This Shigella boydii serotype 4 (strain Sb227) protein is Glutathione import ATP-binding protein GsiA.